The sequence spans 288 residues: 4-diphosphocytidyl-2-C-methyl-D-erythritol kinase (288 aa).

The active site involves lysine 13. 96 to 106 is an ATP binding site; that stretch reads PMGGGIGGGSS. Aspartate 138 is a catalytic residue.

The protein belongs to the GHMP kinase family. IspE subfamily.

It carries out the reaction 4-CDP-2-C-methyl-D-erythritol + ATP = 4-CDP-2-C-methyl-D-erythritol 2-phosphate + ADP + H(+). It functions in the pathway isoprenoid biosynthesis; isopentenyl diphosphate biosynthesis via DXP pathway; isopentenyl diphosphate from 1-deoxy-D-xylulose 5-phosphate: step 3/6. Its function is as follows. Catalyzes the phosphorylation of the position 2 hydroxy group of 4-diphosphocytidyl-2C-methyl-D-erythritol. This is 4-diphosphocytidyl-2-C-methyl-D-erythritol kinase from Aliivibrio fischeri (strain MJ11) (Vibrio fischeri).